A 280-amino-acid polypeptide reads, in one-letter code: tRNase Z TRZ1 (280 aa).

It belongs to the RNase Z family. In terms of assembly, homodimer. Zn(2+) serves as cofactor. It depends on Ca(2+) as a cofactor. The cofactor is Mn(2+). Requires Mg(2+) as cofactor.

It localises to the cytoplasm. It catalyses the reaction Endonucleolytic cleavage of RNA, removing extra 3' nucleotides from tRNA precursor, generating 3' termini of tRNAs. A 3'-hydroxy group is left at the tRNA terminus and a 5'-phosphoryl group is left at the trailer molecule.. In terms of biological role, zinc phosphodiesterase, which displays tRNA 3'-processing endonuclease activity. Involved in tRNA maturation, by removing a 3'-trailer from precursor tRNA. Can use bis-(p-nitophenyl) phosphate (bpNPP) as substrate. Involved in the processing of small nucleolar RNAs (snoRNAs). This chain is tRNase Z TRZ1, found in Arabidopsis thaliana (Mouse-ear cress).